The chain runs to 296 residues: Ribosomal RNA small subunit methyltransferase A (296 aa).

S-adenosyl-L-methionine-binding residues include N31, L33, G58, E79, D111, and N136.

This sequence belongs to the class I-like SAM-binding methyltransferase superfamily. rRNA adenine N(6)-methyltransferase family. RsmA subfamily.

The protein localises to the cytoplasm. The enzyme catalyses adenosine(1518)/adenosine(1519) in 16S rRNA + 4 S-adenosyl-L-methionine = N(6)-dimethyladenosine(1518)/N(6)-dimethyladenosine(1519) in 16S rRNA + 4 S-adenosyl-L-homocysteine + 4 H(+). Its function is as follows. Specifically dimethylates two adjacent adenosines (A1518 and A1519) in the loop of a conserved hairpin near the 3'-end of 16S rRNA in the 30S particle. May play a critical role in biogenesis of 30S subunits. This is Ribosomal RNA small subunit methyltransferase A from Lactobacillus johnsonii (strain CNCM I-12250 / La1 / NCC 533).